The following is a 296-amino-acid chain: Xyloglucan endotransglucosylase/hydrolase 1 (296 aa).

The N-terminal stretch at 1-23 (MGSSSSMWTVCVILASLASAALC) is a signal peptide. The region spanning 24-222 (ANPRRPVDVQ…WSKAPFIAAY (199 aa)) is the GH16 domain. Catalysis depends on glutamate 108, which acts as the Nucleophile. The active-site Proton donor is glutamate 112. Glutamate 112 provides a ligand contact to xyloglucan. N-linked (GlcNAc...) asparagine glycosylation occurs at asparagine 116. Residues 125-127 (QTN), 135-137 (DRE), 201-202 (DW), and glycine 206 each bind xyloglucan. Disulfide bonds link cysteine 230/cysteine 239 and cysteine 276/cysteine 290. A xyloglucan-binding site is contributed by arginine 281.

Belongs to the glycosyl hydrolase 16 family. XTH group 1 subfamily. Post-translationally, contains at least one intrachain disulfide bond essential for its enzymatic activity. In terms of processing, N-glycosylated; not essential for its enzymatic activity.

It is found in the secreted. It localises to the cell wall. Its subcellular location is the extracellular space. The protein resides in the apoplast. The catalysed reaction is breaks a beta-(1-&gt;4) bond in the backbone of a xyloglucan and transfers the xyloglucanyl segment on to O-4 of the non-reducing terminal glucose residue of an acceptor, which can be a xyloglucan or an oligosaccharide of xyloglucan.. Functionally, catalyzes xyloglucan endohydrolysis (XEH) and/or endotransglycosylation (XET). Cleaves and religates xyloglucan polymers, an essential constituent of the primary cell wall, and thereby participates in cell wall construction of growing tissues. This Glycine max (Soybean) protein is Xyloglucan endotransglucosylase/hydrolase 1.